Here is a 404-residue protein sequence, read N- to C-terminus: Cytochrome b561 and DOMON domain-containing protein At2g04850 (404 aa).

The N-terminal stretch at 1–22 (MATLILSFLLLLLATKLPESLA) is a signal peptide. The 131-residue stretch at 43–173 (QQASIAWTYH…TKIHHVWNRG (131 aa)) folds into the DOMON domain. One can recognise a Cytochrome b561 domain in the interval 180–380 (SPTIHPTTST…MEVNSWVVFC (201 aa)). Residues 217–237 (VTHGVVNAISWGFLLPAGAVT) form a helical membrane-spanning segment. Residues H219 and H255 each contribute to the heme b site. A helical membrane pass occupies residues 256–276 (AAIQLTGFLLGTIGFSIGIVL). H288 provides a ligand contact to heme b. The helical transmembrane segment at 290–310 (SLGIATFTAAALQTLALLFRP) threads the bilayer. Residue H324 coordinates heme b. Transmembrane regions (helical) follow at residues 326-346 (FVGY…FEVL) and 359-379 (LCLS…WVVF).

Requires heme b as cofactor.

The protein localises to the membrane. May act as a catecholamine-responsive trans-membrane electron transporter. The sequence is that of Cytochrome b561 and DOMON domain-containing protein At2g04850 from Arabidopsis thaliana (Mouse-ear cress).